The following is a 730-amino-acid chain: LisH domain-containing protein ARMC9 (730 aa).

Positions 7–39 (HESELLGLVKEYLDFAEFEDTLKTFSKECKVKG) constitute a LisH domain. Residues 205–242 (SNNKEMLQQLHQQLLEAERRAMAYLKRYNKMQADYHSL) are a coiled coil. Serine 583 bears the Phosphoserine mark. The tract at residues 675-730 (QNAQQARNGCPRPIPVAQPDDYKEGKRGVAGRATPSSCKSAECAEPVLSSGAQKPK) is disordered.

As to quaternary structure, interacts with TOGARAM1, CCDC66, CEP104, CSPP1 and CEP290. Interacts with NDUFAF2.

It is found in the cytoplasm. Its subcellular location is the cytoskeleton. It localises to the cilium basal body. The protein resides in the cell projection. The protein localises to the cilium. It is found in the microtubule organizing center. Its subcellular location is the centrosome. It localises to the centriole. Involved in ciliogenesis. It is required for appropriate acetylation and polyglutamylation of ciliary microtubules, and regulation of cilium length. Acts as a positive regulator of hedgehog (Hh)signaling. May participate in the trafficking and/or retention of GLI2 and GLI3 proteins at the ciliary tip. This Rattus norvegicus (Rat) protein is LisH domain-containing protein ARMC9 (Armc9).